We begin with the raw amino-acid sequence, 38 residues long: MTQSNPNEQSVELNRTSLYWGLLLIFVLAVLFSSYFFN.

A helical membrane pass occupies residues 17–37 (SLYWGLLLIFVLAVLFSSYFF).

This sequence belongs to the PsbL family. PSII is composed of 1 copy each of membrane proteins PsbA, PsbB, PsbC, PsbD, PsbE, PsbF, PsbH, PsbI, PsbJ, PsbK, PsbL, PsbM, PsbT, PsbX, PsbY, PsbZ, Psb30/Ycf12, at least 3 peripheral proteins of the oxygen-evolving complex and a large number of cofactors. It forms dimeric complexes.

The protein resides in the plastid. It localises to the chloroplast thylakoid membrane. Functionally, one of the components of the core complex of photosystem II (PSII). PSII is a light-driven water:plastoquinone oxidoreductase that uses light energy to abstract electrons from H(2)O, generating O(2) and a proton gradient subsequently used for ATP formation. It consists of a core antenna complex that captures photons, and an electron transfer chain that converts photonic excitation into a charge separation. This subunit is found at the monomer-monomer interface and is required for correct PSII assembly and/or dimerization. In Ephedra sinica (Chinese ephedra), this protein is Photosystem II reaction center protein L.